Consider the following 71-residue polypeptide: UPF0346 protein Sez_1447 (71 aa).

This sequence belongs to the UPF0346 family.

In Streptococcus equi subsp. zooepidemicus (strain MGCS10565), this protein is UPF0346 protein Sez_1447.